Consider the following 464-residue polypeptide: MGVSKLDILYRRLLLTKLFIRGWGRPEDLKRLFEFRKMIGNRERCQNLVSSDYPVHIDKVEEQSDCKILDGHFVSPMAHYVPGIMPIESVIARFQFIVPKEWNSRYRPVCIHLAGTGDHHYWRRRTLMARPMIKEARMASLLLENPYYILLKPKDQVRSSLKNVSDLFVMGGALILESAALLHWLEREGYGPLGMTGISMGGHMASLAVSNWPKPMPLIPCLSWSTASGVFTTGVLSKSINWRELEKQYYTQTVYEEEIIHMLEYCGTDSFKMGHEFMKHFPSNEDKLTNLNLVSRTLNLDMRDQVVSPKHAECHHSGKASISATSKGQLLQDTAKVERLNQTLTTNKSCFASYNPQSLHLLSREQRRSNLQKESLIFMKGVMDECTHVANFSVPVDPSLIIVVQAKEDAYIPRTGVRSLQEIWPGCEIRYLEGGHISAYLFKQGLFRQAIYDAFERFLHKYAN.

An N-terminal signal peptide occupies residues 1-24 (MGVSKLDILYRRLLLTKLFIRGWG). The N-linked (GlcNAc...) asparagine glycan is linked to Asn-341.

Belongs to the AB hydrolase superfamily.

The protein resides in the secreted. In Rattus norvegicus (Rat), this protein is Protein ABHD18.